The following is a 97-amino-acid chain: UstYa family oxidase VicYc (97 aa).

2 consecutive short sequence motifs (HXXHC) follow at residues 11 to 15 and 38 to 42; these read HELHC and HANHC.

Belongs to the ustYa family.

It participates in mycotoxin biosynthesis. UstYa family oxidase, part of the gene cluster that mediates the biosynthesis of the secondary metabolite victorin, the molecular basis for Victoria blight of oats. The role of vicYc within the pathway has still to be determined. The pathway starts with the processing of the precursor vicA1 by several endopeptidases including kexin proteases as well as the cluster-specific S28 family peptidases vicPa and vicPb to produce 7 identical copies of the hexapeptide Gly-Leu-Lys-Leu-Ala-Phe. After being excised from the precursor peptide, the core peptides are cyclized and modified post-translationally by enzymes encoded within the gene cluster. The ustYa family oxidase vicYb is required for the formation of the macrocycle in victorin and the copper amine oxidases (CAOs) vicK1 and vicK2 are responsible for converting victorin to the active form by oxidizing the N-terminal glycyl residue in the peptides to glyoxylate. Relaxed substrate specificity of enzymes in the victorin biosynthetic pathway results in a metabolic grid that produces a set of analogs including victorinines B, C, E or HV-toxin M. The polypeptide is UstYa family oxidase VicYc (Bipolaris victoriae (strain FI3) (Victoria blight of oats agent)).